The sequence spans 360 residues: Nicotinate-nucleotide--dimethylbenzimidazole phosphoribosyltransferase (360 aa).

The Proton acceptor role is filled by Glu-327.

This sequence belongs to the CobT family.

The enzyme catalyses 5,6-dimethylbenzimidazole + nicotinate beta-D-ribonucleotide = alpha-ribazole 5'-phosphate + nicotinate + H(+). Its pathway is nucleoside biosynthesis; alpha-ribazole biosynthesis; alpha-ribazole from 5,6-dimethylbenzimidazole: step 1/2. Catalyzes the synthesis of alpha-ribazole-5'-phosphate from nicotinate mononucleotide (NAMN) and 5,6-dimethylbenzimidazole (DMB). The polypeptide is Nicotinate-nucleotide--dimethylbenzimidazole phosphoribosyltransferase (Shewanella baltica (strain OS155 / ATCC BAA-1091)).